The sequence spans 209 residues: Glutathione S-transferase 2 (209 aa).

Positions 1-81 constitute a GST N-terminal domain; it reads MLDFYYLPGS…YLCDQYGDED (81 aa). Glutathione is bound by residues serine 10, 51–53, and 65–67; these read RTI and ESR. In terms of domain architecture, GST C-terminal spans 88–209; it reads DTIQRAIVNQ…SGAKEFLTYK (122 aa).

Belongs to the GST superfamily. Theta family. As to quaternary structure, homodimer.

It carries out the reaction RX + glutathione = an S-substituted glutathione + a halide anion + H(+). Conjugation of reduced glutathione to a wide number of exogenous and endogenous hydrophobic electrophiles. The chain is Glutathione S-transferase 2 (GstD2) from Anopheles gambiae (African malaria mosquito).